The following is a 110-amino-acid chain: T cell receptor alpha variable 39 (110 aa).

An N-terminal signal peptide occupies residues 1–18 (MKKLLAMILWLQLDRLSG). In terms of domain architecture, Ig-like spans 19-110 (ELKVEQNPLF…LSATYFCAVD (92 aa)). N-linked (GlcNAc...) asparagine glycans are attached at residues Asn36 and Asn42. Residues Cys41 and Cys107 are joined by a disulfide bond.

Alpha-beta TR is a heterodimer composed of an alpha and beta chain; disulfide-linked. The alpha-beta TR is associated with the transmembrane signaling CD3 coreceptor proteins to form the TR-CD3 (TcR or TCR). The assembly of alpha-beta TR heterodimers with CD3 occurs in the endoplasmic reticulum where a single alpha-beta TR heterodimer associates with one CD3D-CD3E heterodimer, one CD3G-CD3E heterodimer and one CD247 homodimer forming a stable octameric structure. CD3D-CD3E and CD3G-CD3E heterodimers preferentially associate with TR alpha and TR beta chains, respectively. The association of the CD247 homodimer is the last step of TcR assembly in the endoplasmic reticulum and is required for transport to the cell surface.

The protein resides in the cell membrane. V region of the variable domain of T cell receptor (TR) alpha chain that participates in the antigen recognition. Alpha-beta T cell receptors are antigen specific receptors which are essential to the immune response and are present on the cell surface of T lymphocytes. Recognize peptide-major histocompatibility (MH) (pMH) complexes that are displayed by antigen presenting cells (APC), a prerequisite for efficient T cell adaptive immunity against pathogens. Binding of alpha-beta TR to pMH complex initiates TR-CD3 clustering on the cell surface and intracellular activation of LCK that phosphorylates the ITAM motifs of CD3G, CD3D, CD3E and CD247 enabling the recruitment of ZAP70. In turn ZAP70 phosphorylates LAT, which recruits numerous signaling molecules to form the LAT signalosome. The LAT signalosome propagates signal branching to three major signaling pathways, the calcium, the mitogen-activated protein kinase (MAPK) kinase and the nuclear factor NF-kappa-B (NF-kB) pathways, leading to the mobilization of transcription factors that are critical for gene expression and essential for T cell growth and differentiation. The T cell repertoire is generated in the thymus, by V-(D)-J rearrangement. This repertoire is then shaped by intrathymic selection events to generate a peripheral T cell pool of self-MH restricted, non-autoaggressive T cells. Post-thymic interaction of alpha-beta TR with the pMH complexes shapes TR structural and functional avidity. In Homo sapiens (Human), this protein is T cell receptor alpha variable 39.